The sequence spans 226 residues: UPF0758 protein M6_Spy0838 (226 aa).

Positions 103–225 (SVLTSVQVAE…YYSFREKSTL (123 aa)) constitute an MPN domain. 3 residues coordinate Zn(2+): His174, His176, and Asp187. Residues 174–187 (HNHPSGNIEPSSND) carry the JAMM motif motif.

Belongs to the UPF0758 family.

The chain is UPF0758 protein M6_Spy0838 from Streptococcus pyogenes serotype M6 (strain ATCC BAA-946 / MGAS10394).